The primary structure comprises 391 residues: GTPase Obg (391 aa).

Residues 1-159 enclose the Obg domain; sequence MKFVDEARIL…RELMLELMLL (159 aa). The OBG-type G domain occupies 160 to 333; it reads ADVGMLGMPN…LCWDIMEFMK (174 aa). GTP contacts are provided by residues 166–173, 191–195, 213–216, 283–286, and 314–316; these read GMPNAGKS, FTTLV, DIPG, NKVD, and SAI. The Mg(2+) site is built by S173 and T193.

This sequence belongs to the TRAFAC class OBG-HflX-like GTPase superfamily. OBG GTPase family. As to quaternary structure, monomer. Mg(2+) serves as cofactor.

It is found in the cytoplasm. Functionally, an essential GTPase which binds GTP, GDP and possibly (p)ppGpp with moderate affinity, with high nucleotide exchange rates and a fairly low GTP hydrolysis rate. Plays a role in control of the cell cycle, stress response, ribosome biogenesis and in those bacteria that undergo differentiation, in morphogenesis control. The sequence is that of GTPase Obg from Photorhabdus laumondii subsp. laumondii (strain DSM 15139 / CIP 105565 / TT01) (Photorhabdus luminescens subsp. laumondii).